Consider the following 189-residue polypeptide: ECF RNA polymerase sigma-E factor (189 aa).

The binds RNAP core stretch occupies residues 1–153 (MAEQLTDQAL…TAITLRELEG (153 aa)). The sigma-70 factor domain-2 stretch occupies residues 25-92 (LVSRYQNKVA…KNYLTAQGRR (68 aa)). The Polymerase core binding signature appears at 48-61 (DVVQESFIKAYRSI). The sigma-70 factor domain-4 stretch occupies residues 129-180 (RIVFDTIHNLPEDLKTAITLRELEGLSYEDIAEIMDCPVGTVRSRIFRAREM). Positions 156-175 (YEDIAEIMDCPVGTVRSRIF) form a DNA-binding region, H-T-H motif.

Belongs to the sigma-70 factor family. ECF subfamily. In terms of assembly, interacts transiently with the RNAP catalytic core formed by RpoA, RpoB, RpoC and RpoZ (2 alpha, 1 beta, 1 beta' and 1 omega subunit) to form the RNAP holoenzyme that can initiate transcription. Interacts 1:1 with anti-sigma-E factor RseA which prevents binding to RNAP catalytic core.

Its subcellular location is the cytoplasm. With respect to regulation, ECF sigma-E is held in an inactive form by its cognate anti-sigma factor (RseA) until released by regulated intramembrane proteolysis (RIP). RIP occurs when an extracytoplasmic signal (periplasmic stress and excess LPS) triggers a concerted proteolytic cascade to transmit information and elicit cellular responses. The anti-sigma factor RseA is an inner membrane protein, binding sigma-E in the cytoplasm and RseB in the periplasm. RseA is first cut extracytoplasmically (site-1 protease, S1P, by DegS), then within the membrane itself (site-2 protease, S2P, by RseP), while cytoplasmic proteases (predominantly ClpX-ClpP) finish degrading the regulatory protein, liberating sigma-E. Degradation of RseA requires 2 signals to activate DegS; an outer membrane protein (OMP) signal activates DegS, while an LPS signal causes release of RseB from RseA, freeing RseA to be cleaved. Functionally, sigma factors are initiation factors that promote the attachment of RNA polymerase (RNAP) to specific initiation sites and are then released. Extracytoplasmic function (ECF) sigma-E controls the envelope stress response, responding to periplasmic protein stress, increased levels of periplasmic lipopolysaccharide (LPS) as well as heat shock and oxidative stress; it controls protein processing in the extracytoplasmic compartment. This is ECF RNA polymerase sigma-E factor (rpoE) from Haemophilus influenzae (strain ATCC 51907 / DSM 11121 / KW20 / Rd).